Here is a 199-residue protein sequence, read N- to C-terminus: MSEKPEKIVLASGNAGKLEEFGNLFKPYSITVLPQSAFGIPECPEPYPTFVENALAKARHAAKYSGLPALADDSGICAAALNGAPGIHSARYAGDNPKSDTANNLKLAAELVGKADKSCCYVCVLVFVRHKDDPRPIIAEGVWHGQWNDTPLGQNGFGYDPYFYLPEHGKTAAELDTEVKNRESHRAQALAELLRKLAL.

12–17 is a substrate binding site; it reads SGNAGK. Residue Asp-73 is the Proton acceptor of the active site. A Mg(2+)-binding site is contributed by Asp-73. Substrate is bound by residues Ser-74, 157 to 160, Lys-180, and 185 to 186; these read FGYD and HR.

It belongs to the HAM1 NTPase family. As to quaternary structure, homodimer. Mg(2+) serves as cofactor.

The enzyme catalyses XTP + H2O = XMP + diphosphate + H(+). It catalyses the reaction dITP + H2O = dIMP + diphosphate + H(+). It carries out the reaction ITP + H2O = IMP + diphosphate + H(+). Its function is as follows. Pyrophosphatase that catalyzes the hydrolysis of nucleoside triphosphates to their monophosphate derivatives, with a high preference for the non-canonical purine nucleotides XTP (xanthosine triphosphate), dITP (deoxyinosine triphosphate) and ITP. Seems to function as a house-cleaning enzyme that removes non-canonical purine nucleotides from the nucleotide pool, thus preventing their incorporation into DNA/RNA and avoiding chromosomal lesions. The protein is dITP/XTP pyrophosphatase of Neisseria meningitidis serogroup B (strain ATCC BAA-335 / MC58).